The following is a 124-amino-acid chain: Acidic phospholipase A2 BA2 (124 aa).

7 cysteine pairs are disulfide-bonded: Cys-26/Cys-116, Cys-28/Cys-44, Cys-43/Cys-95, Cys-49/Cys-124, Cys-50/Cys-88, Cys-57/Cys-81, and Cys-75/Cys-86. Ca(2+) contacts are provided by Tyr-27, Gly-29, and Gly-31. The active site involves His-47. Asp-48 is a Ca(2+) binding site. The active site involves Asp-89.

This sequence belongs to the phospholipase A2 family. Group II subfamily. D49 sub-subfamily. The cofactor is Ca(2+). Expressed by the venom gland.

Its subcellular location is the secreted. It catalyses the reaction a 1,2-diacyl-sn-glycero-3-phosphocholine + H2O = a 1-acyl-sn-glycero-3-phosphocholine + a fatty acid + H(+). Functionally, PLA2 catalyzes the calcium-dependent hydrolysis of the 2-acyl groups in 3-sn-phosphoglycerides. The polypeptide is Acidic phospholipase A2 BA2 (Gloydius halys (Chinese water mocassin)).